A 161-amino-acid chain; its full sequence is Cyclic pyranopterin monophosphate synthase (161 aa).

Substrate-binding positions include Met-75 to His-77 and Met-115 to Glu-116. Asp-130 is an active-site residue.

The protein belongs to the MoaC family. As to quaternary structure, homohexamer; trimer of dimers.

The enzyme catalyses (8S)-3',8-cyclo-7,8-dihydroguanosine 5'-triphosphate = cyclic pyranopterin phosphate + diphosphate. It functions in the pathway cofactor biosynthesis; molybdopterin biosynthesis. In terms of biological role, catalyzes the conversion of (8S)-3',8-cyclo-7,8-dihydroguanosine 5'-triphosphate to cyclic pyranopterin monophosphate (cPMP). This is Cyclic pyranopterin monophosphate synthase from Bacillus mycoides (strain KBAB4) (Bacillus weihenstephanensis).